A 251-amino-acid polypeptide reads, in one-letter code: Hydroxyacylglutathione hydrolase (251 aa).

H53, H55, D57, H58, H110, D127, and H165 together coordinate Zn(2+).

The protein belongs to the metallo-beta-lactamase superfamily. Glyoxalase II family. As to quaternary structure, monomer. Zn(2+) serves as cofactor.

The catalysed reaction is an S-(2-hydroxyacyl)glutathione + H2O = a 2-hydroxy carboxylate + glutathione + H(+). It functions in the pathway secondary metabolite metabolism; methylglyoxal degradation; (R)-lactate from methylglyoxal: step 2/2. Functionally, thiolesterase that catalyzes the hydrolysis of S-D-lactoyl-glutathione to form glutathione and D-lactic acid. This is Hydroxyacylglutathione hydrolase from Salmonella arizonae (strain ATCC BAA-731 / CDC346-86 / RSK2980).